Consider the following 289-residue polypeptide: DDRGK domain-containing protein 1 (289 aa).

Over 1–2 the chain is Lumenal; it reads MD. Residues 3-23 traverse the membrane as a helical segment; that stretch reads PFILAAIISGIVIIILSIAFL. The Cytoplasmic segment spans residues 24–289; that stretch reads RVSQVKPQAA…LINLAPVTVP (266 aa). Residues 65–168 form a disordered region; that stretch reads RHQAALEEEP…DERKKREQEE (104 aa). Residues 70-85 show a composition bias toward acidic residues; the sequence is LEEEPEIQEEADEGAP. The span at 87–166 shows a compositional bias: basic and acidic residues; sequence IDQKIDFDDK…AEDERKKREQ (80 aa).

Belongs to the DDRGK1 family. In terms of assembly, interacts with Atg9; the interaction is transient.

It localises to the endoplasmic reticulum membrane. Functionally, substrate adapter for ufmylation, the covalent attachment of the ubiquitin-like modifier UFM1 to substrate proteins. Required for ufmylation of Atg9; protects the nervous system during aging, possibly by stabilizing Atg9 and supporting its function. The sequence is that of DDRGK domain-containing protein 1 from Bombyx mori (Silk moth).